The sequence spans 529 residues: Listeriolysin O (529 aa).

A signal peptide spans 1–24 (MKKIMLVFITLILVSLPIAQQTEA). A run of 4 beta stranded transmembrane segments spans residues 214-227 (ESQL…AFKA), 234-243 (VNFGAISEGK), 312-321 (STKVKAAFDA), and 329-341 (SGDV…IKNS). Residues 483-493 (ECTGLAWEWWR) carry the Conserved undecapeptide motif. The Cholesterol binding signature appears at 515–516 (TL).

Belongs to the cholesterol-dependent cytolysin family. As to quaternary structure, homooligomeric pore complex of 35 to 50 subunits; when inserted in the host membrane.

The protein localises to the secreted. It localises to the host membrane. The protein resides in the host cell membrane. Activity of listeriolysin O is regulated on multiple levels. It should be high in the phagosome, thereby allowing escape of the bacteria from the phagosomal compartment. Then, once inside the host cytosol, the activity must be controlled to prevent lysis of the host plasma membrane and loss of the intracellular environment. A cholesterol-dependent toxin that causes cytolysis by forming pores in cholesterol containing host membranes. After binding to target membranes, the protein undergoes a major conformation change, leading to its insertion in the host membrane and formation of an oligomeric pore complex. Cholesterol is required for binding to host membranes, membrane insertion and pore formation; cholesterol binding is mediated by a Thr-Leu pair in the C-terminus. Acts as a major virulence factor required for the escape of bacteria from phagosomal vacuoles and entry into the host cytosol. Can be reversibly inactivated by oxidation. The sequence is that of Listeriolysin O (hly) from Listeria monocytogenes serotype 4b (strain CLIP80459).